Reading from the N-terminus, the 234-residue chain is SPX domain-containing protein 6 (234 aa).

The region spanning 1-137 (MKFGKLLKRQ…GGALAAPVAE (137 aa)) is the SPX domain. Positions 202–234 (GSSTHGRHSLPPLTLPDSDWLRSFQPPSPIPIQ) are disordered.

In terms of tissue distribution, predominantly expressed in roots and leaves.

May be involved in maintaining cellular Pi homeostasis when plants are exposed to an external change in Pi. In Oryza sativa subsp. japonica (Rice), this protein is SPX domain-containing protein 6.